A 283-amino-acid chain; its full sequence is Shikimate kinase (283 aa).

Residue 86 to 96 (PLKSGLSSSSA) coordinates ATP.

It belongs to the GHMP kinase family. Archaeal shikimate kinase subfamily.

It is found in the cytoplasm. The enzyme catalyses shikimate + ATP = 3-phosphoshikimate + ADP + H(+). The protein operates within metabolic intermediate biosynthesis; chorismate biosynthesis; chorismate from D-erythrose 4-phosphate and phosphoenolpyruvate: step 5/7. The polypeptide is Shikimate kinase (Methanococcus vannielii (strain ATCC 35089 / DSM 1224 / JCM 13029 / OCM 148 / SB)).